The following is a 465-amino-acid chain: Ribulose bisphosphate carboxylase large chain (465 aa).

N6,N6,N6-trimethyllysine is present on Lys4. Substrate is bound by residues Asn113 and Thr163. Residue Lys165 is the Proton acceptor of the active site. A substrate-binding site is contributed by Lys167. Mg(2+) contacts are provided by Lys191, Asp193, and Glu194. Lys191 is subject to N6-carboxylysine. The active-site Proton acceptor is the His284. The substrate site is built by Arg285, His317, and Ser369.

The protein belongs to the RuBisCO large chain family. Type I subfamily. As to quaternary structure, heterohexadecamer of 8 large chains and 8 small chains; disulfide-linked. The disulfide link is formed within the large subunit homodimers. The cofactor is Mg(2+). In terms of processing, the disulfide bond which can form in the large chain dimeric partners within the hexadecamer appears to be associated with oxidative stress and protein turnover.

It localises to the plastid. The protein resides in the chloroplast. It carries out the reaction 2 (2R)-3-phosphoglycerate + 2 H(+) = D-ribulose 1,5-bisphosphate + CO2 + H2O. The enzyme catalyses D-ribulose 1,5-bisphosphate + O2 = 2-phosphoglycolate + (2R)-3-phosphoglycerate + 2 H(+). Functionally, ruBisCO catalyzes two reactions: the carboxylation of D-ribulose 1,5-bisphosphate, the primary event in carbon dioxide fixation, as well as the oxidative fragmentation of the pentose substrate in the photorespiration process. Both reactions occur simultaneously and in competition at the same active site. This Humiria balsamifera (Tauroniro) protein is Ribulose bisphosphate carboxylase large chain.